Here is a 334-residue protein sequence, read N- to C-terminus: Baseplate wedge protein gp8 (334 aa).

Residues Cys142 and Cys153 are joined by a disulfide bond.

This sequence belongs to the tevenvirinae baseplate structural protein gp8 family. In terms of assembly, homodimer. Interacts with gp7. Part of the baseplate macromolecular complex which consists of gp5, gp5.4, gp27 (central spike complex); gp6, gp25, gp53 (inner baseplate); gp7, gp8 (intermediate baseplate); gp9, gp10, gp11, gp12 (peripheral); gp48 and gp54 (proximal region of the tail tube).

The protein resides in the virion. Intermediate baseplate protein. Involved in the tail assembly. This Enterobacteria phage T4 (Bacteriophage T4) protein is Baseplate wedge protein gp8 (8).